We begin with the raw amino-acid sequence, 536 residues long: Phosphoenolpyruvate carboxykinase (ATP) (536 aa).

The substrate site is built by Arg-61, Tyr-195, and Lys-201. ATP contacts are provided by residues Lys-201, His-220, and 236-244 (GLSGTGKTT). Positions 201 and 220 each coordinate Mn(2+). Asp-257 is a Mn(2+) binding site. 3 residues coordinate ATP: Glu-285, Arg-322, and Thr-447. A substrate-binding site is contributed by Arg-322.

This sequence belongs to the phosphoenolpyruvate carboxykinase (ATP) family. The cofactor is Mn(2+).

Its subcellular location is the cytoplasm. The enzyme catalyses oxaloacetate + ATP = phosphoenolpyruvate + ADP + CO2. Its pathway is carbohydrate biosynthesis; gluconeogenesis. Involved in the gluconeogenesis. Catalyzes the conversion of oxaloacetate (OAA) to phosphoenolpyruvate (PEP) through direct phosphoryl transfer between the nucleoside triphosphate and OAA. In Mesorhizobium japonicum (strain LMG 29417 / CECT 9101 / MAFF 303099) (Mesorhizobium loti (strain MAFF 303099)), this protein is Phosphoenolpyruvate carboxykinase (ATP).